We begin with the raw amino-acid sequence, 150 residues long: Putative STAG3-like protein 4 (150 aa).

The protein belongs to the SCC3 family.

The protein is Putative STAG3-like protein 4 (STAG3L4) of Homo sapiens (Human).